The sequence spans 428 residues: Putative gustatory receptor 2a (428 aa).

At 1 to 40 the chain is on the cytoplasmic side; the sequence is MDTLRALEPLHRACQVCNLWPWRLAPPPDSEGILLRRSRW. The helical transmembrane segment at 41 to 61 threads the bilayer; sequence LELYGWTVLIAATSFTVYGLF. Topologically, residues 62–145 are extracellular; it reads QESSVEEKQD…INMRRQTSRR (84 aa). Residues 146 to 166 form a helical membrane-spanning segment; the sequence is AVWILWGYAVSQLLILGAKLL. Residues 167–173 are Cytoplasmic-facing; sequence SRGDRFP. Residues 174 to 194 traverse the membrane as a helical segment; sequence IYWISYLLPLLVCGLRYFQIF. Asn195 is a glycosylation site (N-linked (GlcNAc...) asparagine). The Extracellular portion of the chain corresponds to 195-250; sequence NATQLVRQRLDVLLVALQQLQLHQKGPAVDTVLEEQEDLEEAAMDRLIAVRLVYQR. The chain crosses the membrane as a helical span at residues 251–271; that stretch reads VWALVALLNRCYGLSMLMQVG. Topologically, residues 272 to 300 are cytoplasmic; the sequence is NDFLAITSNCYWMFLNFRQSAASPFDILQ. Residues 301–321 traverse the membrane as a helical segment; that stretch reads IVASGVWSAPHLGNVLVLSLL. Residues 322–349 are Extracellular-facing; sequence CDRTAQCASRLALCLHQVSVDLRNESHN. Asn345 carries an N-linked (GlcNAc...) asparagine glycan. The chain crosses the membrane as a helical span at residues 350-370; it reads ALVGTLVRYCAPLIILVPLQI. Over 371–395 the chain is Cytoplasmic; the sequence is TQFSLQLLHQRLHFSAAGFFNVDCT. A helical membrane pass occupies residues 396-416; it reads LLYTIVGATTTYLIILIQFHM. At 417–428 the chain is on the extracellular side; sequence SESTIGSDSNGQ.

Belongs to the insect chemoreceptor superfamily. Gustatory receptor (GR) family. Gr2a subfamily. As to expression, expressed in neurons of the terminal external chemosensory organ, the dorsal external chemosensory organ, as well as in the dorsal pharyngeal sense organ of larvae.

The protein resides in the cell membrane. Functionally, probable gustatory receptor which mediates acceptance or avoidance behavior, depending on its not yet determined substrates. The polypeptide is Putative gustatory receptor 2a (Gr2a) (Drosophila melanogaster (Fruit fly)).